The following is a 161-amino-acid chain: NAD(P)H-quinone oxidoreductase subunit I, chloroplastic (161 aa).

4Fe-4S ferredoxin-type domains are found at residues 55 to 84 and 95 to 124; these read GRIHFEFDKCIACEVCVRVCPIDLPIVDWK and LNYSIDFGICIFCGNCIEYCPTNCLSMTEE. [4Fe-4S] cluster is bound by residues cysteine 64, cysteine 67, cysteine 70, cysteine 74, cysteine 104, cysteine 107, cysteine 110, and cysteine 114.

This sequence belongs to the complex I 23 kDa subunit family. NDH is composed of at least 16 different subunits, 5 of which are encoded in the nucleus. [4Fe-4S] cluster is required as a cofactor.

It is found in the plastid. It localises to the chloroplast thylakoid membrane. The catalysed reaction is a plastoquinone + NADH + (n+1) H(+)(in) = a plastoquinol + NAD(+) + n H(+)(out). It carries out the reaction a plastoquinone + NADPH + (n+1) H(+)(in) = a plastoquinol + NADP(+) + n H(+)(out). NDH shuttles electrons from NAD(P)H:plastoquinone, via FMN and iron-sulfur (Fe-S) centers, to quinones in the photosynthetic chain and possibly in a chloroplast respiratory chain. The immediate electron acceptor for the enzyme in this species is believed to be plastoquinone. Couples the redox reaction to proton translocation, and thus conserves the redox energy in a proton gradient. The polypeptide is NAD(P)H-quinone oxidoreductase subunit I, chloroplastic (Phaseolus vulgaris (Kidney bean)).